The following is a 261-amino-acid chain: Ribonuclease PH (261 aa).

Phosphate-binding positions include arginine 87 and 125–127 (GTR).

The protein belongs to the RNase PH family. In terms of assembly, homohexameric ring arranged as a trimer of dimers.

The enzyme catalyses tRNA(n+1) + phosphate = tRNA(n) + a ribonucleoside 5'-diphosphate. In terms of biological role, phosphorolytic 3'-5' exoribonuclease that plays an important role in tRNA 3'-end maturation. Removes nucleotide residues following the 3'-CCA terminus of tRNAs; can also add nucleotides to the ends of RNA molecules by using nucleoside diphosphates as substrates, but this may not be physiologically important. Probably plays a role in initiation of 16S rRNA degradation (leading to ribosome degradation) during starvation. The protein is Ribonuclease PH of Desulforudis audaxviator (strain MP104C).